Consider the following 166-residue polypeptide: Large ribosomal subunit protein uL11x (166 aa).

This sequence belongs to the universal ribosomal protein uL11 family.

In terms of biological role, binds directly to 26S ribosomal RNA. This chain is Large ribosomal subunit protein uL11x (RPL12C), found in Arabidopsis thaliana (Mouse-ear cress).